A 355-amino-acid chain; its full sequence is Protein RecA (355 aa).

65 to 72 (GPESSGKT) lines the ATP pocket.

This sequence belongs to the RecA family.

It is found in the cytoplasm. In terms of biological role, can catalyze the hydrolysis of ATP in the presence of single-stranded DNA, the ATP-dependent uptake of single-stranded DNA by duplex DNA, and the ATP-dependent hybridization of homologous single-stranded DNAs. It interacts with LexA causing its activation and leading to its autocatalytic cleavage. This chain is Protein RecA, found in Pseudomonas putida (strain GB-1).